Reading from the N-terminus, the 914-residue chain is MSDNEYDITNALALDAGSDSDSDVSSGREDVEDDIQDEIISDDEEKSSSSQNKKPKISTKPESFPSLELSDDEDDESRPSEVAEYFSNNKLQATKAKAGSFASFGLSKFLLKNIAKKGFKQPTPIQRKTIPLVMESRDVVGMARTGSGKTAAFVLPVVEKLKSHSPKVGVRAVILSPSRELALQTFKQVKEFTKGTDLRSIVLIGGDSLEDQFSSMMTNPDILVATPGRFLHLKVEMNLDLKTVEYIVFDEADRLFEMGFAEQLNELLVALPPSRQSLLFSATLPRSLVDFAKAGLSNPVLVRLDAETKISDQLQMAFFTTKRTERDANLLYILSEVIKMPLATQDQIKKLKELEEGADDDDSDEEKKPKKKKRKLEKPAPANRLPSEHSTIVFVPTKHHVEYVTTLLRDAGHLVSYIYGTLDQHARKQQLYQFRAAYTNILVVTDVAARGIDIPVLANVVNYTLPGSSKIFIHRVGRTARAGNKGWAYSIVNEKELPYLLDLELFLGKKVLLTQMHEKKVQICHEKGLSAPEVSYKDRLVLGSAPRVDIESSQELCDNLLRNHYELRTIRDVANKGEILYYRTRQPASQESVKRAKEIMDTGAWDDQHLLFGANLEKEKEKFLAKLADRKVKETVFEFRNKGQRDEDSLVEFMHKRRRQIAPIQRRAKERKQLLEKERMAGLTHGIENEILKGDGEVGYDNYNGADLDEVFEDGDEALSKKKRKTYRDPQFFLSHYAPASVIQDKQLELSSFSNEAAAATYDLDNDDKTQTNKQIMRWDKKKGKYINSQSTDKKYIIGESGQKIPATYRSGRYEDWRKSRNAQPLRTGAEEVKSNGRFKHKKVAAPKMPDKFRDDYHKQKKKVEKALDAGVSVKGYNRPGQQQELRSTEQIRKARELKEKRKAKNARPSKRRK.

A disordered region spans residues 1–81 (MSDNEYDITN…DEDDESRPSE (81 aa)). The segment covering 12–25 (LALDAGSDSDSDVS) has biased composition (low complexity). The span at 30–45 (DVEDDIQDEIISDDEE) shows a compositional bias: acidic residues. Residues 99–127 (GSFASFGLSKFLLKNIAKKGFKQPTPIQR) carry the Q motif motif. Residues 130 to 302 (IPLVMESRDV…KAGLSNPVLV (173 aa)) form the Helicase ATP-binding domain. Residue 143–150 (ARTGSGKT) participates in ATP binding. Residues 250-253 (DEAD) carry the DEAD box motif. Disordered regions lie at residues 353–389 (ELEE…PSEH) and 840–914 (KHKK…KRRK). Residues 368–522 (KPKKKKRKLE…LTQMHEKKVQ (155 aa)) enclose the Helicase C-terminal domain. Composition is skewed to basic and acidic residues over residues 849-858 (MPDKFRDDYH) and 887-900 (RSTE…ELKE). A compositionally biased stretch (basic residues) spans 901 to 914 (KRKAKNARPSKRRK).

The protein belongs to the DEAD box helicase family. DDX54/DBP10 subfamily.

It is found in the nucleus. The protein localises to the nucleolus. It catalyses the reaction ATP + H2O = ADP + phosphate + H(+). In terms of biological role, ATP-binding RNA helicase involved in the biogenesis of 60S ribosomal subunits and is required for the normal formation of 25S and 5.8S rRNAs. This chain is ATP-dependent RNA helicase DBP10 (DBP10), found in Meyerozyma guilliermondii (strain ATCC 6260 / CBS 566 / DSM 6381 / JCM 1539 / NBRC 10279 / NRRL Y-324) (Yeast).